The chain runs to 164 residues: Peptidyl-prolyl cis-trans isomerase A-like 4C (164 aa).

Positions 7 to 163 (FFDITVDGKP…KKITIADCGQ (157 aa)) constitute a PPIase cyclophilin-type domain.

Belongs to the cyclophilin-type PPIase family. PPIase A subfamily.

The protein resides in the cytoplasm. It carries out the reaction [protein]-peptidylproline (omega=180) = [protein]-peptidylproline (omega=0). Its function is as follows. PPIases accelerate the folding of proteins. It catalyzes the cis-trans isomerization of proline imidic peptide bonds in oligopeptides. This is Peptidyl-prolyl cis-trans isomerase A-like 4C from Homo sapiens (Human).